Here is a 564-residue protein sequence, read N- to C-terminus: CTP synthase (564 aa).

Residues 1–265 (MTKFVFVTGG…DEIVCHRLGI (265 aa)) form an amidoligase domain region. S13 contacts CTP. A UTP-binding site is contributed by S13. ATP is bound by residues 14 to 19 (SLGKGI) and D71. Positions 71 and 139 each coordinate Mg(2+). CTP contacts are provided by residues 146 to 148 (DIE), 186 to 191 (KTKPTQ), and K222. Residues 186–191 (KTKPTQ) and K222 contribute to the UTP site. One can recognise a Glutamine amidotransferase type-1 domain in the interval 290 to 543 (SIALVGKYVD…VRAAISFADK (254 aa)). G351 provides a ligand contact to L-glutamine. C378 functions as the Nucleophile; for glutamine hydrolysis in the catalytic mechanism. L-glutamine contacts are provided by residues 379–382 (LGMQ), E402, and R469. Residues H516 and E518 contribute to the active site.

Belongs to the CTP synthase family. In terms of assembly, homotetramer.

It carries out the reaction UTP + L-glutamine + ATP + H2O = CTP + L-glutamate + ADP + phosphate + 2 H(+). The catalysed reaction is L-glutamine + H2O = L-glutamate + NH4(+). The enzyme catalyses UTP + NH4(+) + ATP = CTP + ADP + phosphate + 2 H(+). The protein operates within pyrimidine metabolism; CTP biosynthesis via de novo pathway; CTP from UDP: step 2/2. With respect to regulation, allosterically activated by GTP, when glutamine is the substrate; GTP has no effect on the reaction when ammonia is the substrate. The allosteric effector GTP functions by stabilizing the protein conformation that binds the tetrahedral intermediate(s) formed during glutamine hydrolysis. Inhibited by the product CTP, via allosteric rather than competitive inhibition. Catalyzes the ATP-dependent amination of UTP to CTP with either L-glutamine or ammonia as the source of nitrogen. Regulates intracellular CTP levels through interactions with the four ribonucleotide triphosphates. In Nitrosomonas eutropha (strain DSM 101675 / C91 / Nm57), this protein is CTP synthase.